The primary structure comprises 104 residues: MGIDPNYRTNRQVVGEHSGHKVYGPVEPPKVLGIHGTIVGVDFDLCIADGSCINACPVNVFQWYDTPGHPASEKKADPVNEQACIFCMACVNVCPVAAIDVKPP.

Residues 2 to 37 are N-terminal extension; the sequence is GIDPNYRTNRQVVGEHSGHKVYGPVEPPKVLGIHGT. 2 residues coordinate Zn(2+): H17 and H20. K30 carries the N6-methyllysine modification. Zn(2+) is bound at residue H35. 2 4Fe-4S ferredoxin-type domains span residues 38–66 and 75–104; these read IVGV…WYDT and KADP…VKPP. [3Fe-4S] cluster contacts are provided by C46 and C52. C56 contacts [4Fe-4S] cluster. D77 contacts Zn(2+). Positions 84, 87, and 90 each coordinate [4Fe-4S] cluster. Position 94 (C94) interacts with [3Fe-4S] cluster.

It depends on [3Fe-4S] cluster as a cofactor. The cofactor is [4Fe-4S] cluster. Requires Zn(2+) as cofactor.

Functionally, ferredoxins are iron-sulfur proteins that transfer electrons in a wide variety of metabolic reactions. The sequence is that of Zinc-containing ferredoxin-1 (zfx1) from Sulfurisphaera tokodaii (strain DSM 16993 / JCM 10545 / NBRC 100140 / 7) (Sulfolobus tokodaii).